A 746-amino-acid polypeptide reads, in one-letter code: SNF-related serine/threonine-protein kinase (746 aa).

Residues 16–269 (YDLDKTLGRG…LEEIESHPWL (254 aa)) enclose the Protein kinase domain. ATP contacts are provided by residues 22–30 (LGRGHFAVV) and lysine 45. Aspartate 139 acts as the Proton acceptor in catalysis. Residue serine 162 is modified to Phosphoserine. Threonine 173 bears the Phosphothreonine; by LKB1 mark. The region spanning 291-334 (SEEEHNSIIQRMVLGDIADRDAIVEALETNRYNHITATYFLLAE) is the UBA domain. A phosphoserine mark is found at serine 362, serine 390, serine 482, serine 495, and serine 518. Residues 383–414 (SHATVPQSPARAGDSVLNGHRSKGLCDPAKKD) form a disordered region. Acidic residues predominate over residues 494–503 (ESDDEFDMDE). Residues 494–638 (ESDDEFDMDE…SSSSSPASAA (145 aa)) form a disordered region. The span at 522-532 (VHKRYHRRKSQ) shows a compositional bias: basic residues. Low complexity predominate over residues 533-542 (GRGSSCSSSE). The residue at position 534 (arginine 534) is an Omega-N-methylarginine. A compositionally biased stretch (basic and acidic residues) spans 549-558 (ESRRRLDKDS). 2 stretches are compositionally biased toward gly residues: residues 575 to 592 (GSEGDGGGQSKPSGGGGV) and 600 to 614 (QGTGGSGQGGSGGTP). The segment covering 615–638 (SGTAGSSRRCAGPDSSSSSPASAA) has biased composition (low complexity).

Belongs to the protein kinase superfamily. CAMK Ser/Thr protein kinase family. Requires Mg(2+) as cofactor. Autophosphorylated. Phosphorylation on Thr-173 by STK11/LKB1 in complex with STE20-related adapter-alpha (STRADA) pseudo kinase and CAB39. As to expression, ubiquitously expressed in all tissues examined with highest levels in the brain and testis. Strongly expressed in the pyramidal and granule neurons of the hippocampus and also in the cerebellum.

The protein resides in the nucleus. The catalysed reaction is L-seryl-[protein] + ATP = O-phospho-L-seryl-[protein] + ADP + H(+). It catalyses the reaction L-threonyl-[protein] + ATP = O-phospho-L-threonyl-[protein] + ADP + H(+). With respect to regulation, activated by phosphorylation on Thr-173. Its function is as follows. May play a role in hematopoietic cell proliferation or differentiation. Potential mediator of neuronal apoptosis. The chain is SNF-related serine/threonine-protein kinase from Rattus norvegicus (Rat).